Consider the following 119-residue polypeptide: uncharacterized protein (119 aa).

Positions 1–29 (MKKVGEEEIKQEENEKEKIVKKLNESDVK) form a coiled coil.

This is an uncharacterized protein from Acidianus sp. F28 (AFV-2).